A 542-amino-acid chain; its full sequence is Leucine-rich repeat-containing protein 56 (542 aa).

LRR repeat units lie at residues 94-115 (NLDQ…GTSL), 117-138 (HLQV…ASLP), 139-160 (ALKE…CLLE), 161-182 (QLEV…RYLQ), and 186-206 (RLAM…PGPT). The region spanning 207–250 (NKVPRGYNYRAEVRKLIPQLQVLDEVPAAHTGPPAPPRLSQDWL) is the LRRCT domain. Disordered regions lie at residues 308–377 (LLSE…ADSS), 396–475 (LPYR…LQSR), and 507–542 (RLSP…PVPT). Positions 416–426 (RVPEEQVHQAE) are enriched in basic and acidic residues. A compositionally biased stretch (low complexity) spans 522 to 532 (PDAAARPPRAA).

It belongs to the LRRC56 family. As to quaternary structure, interacts with IFT88.

It localises to the cell projection. The protein localises to the cilium. In terms of biological role, required for the assembly of dynein arms. This Homo sapiens (Human) protein is Leucine-rich repeat-containing protein 56 (LRRC56).